We begin with the raw amino-acid sequence, 537 residues long: Phosphoenolpyruvate carboxykinase (ATP) (537 aa).

Substrate-binding residues include arginine 61, tyrosine 195, and lysine 201. Residues lysine 201, histidine 220, and 236-244 contribute to the ATP site; that span reads GLSGTGKTT. Mn(2+) contacts are provided by lysine 201 and histidine 220. Aspartate 257 is a Mn(2+) binding site. Glutamate 285 provides a ligand contact to ATP. A compositionally biased stretch (basic and acidic residues) spans 312–321; it reads DFNDGSKTEN. Residues 312-339 are disordered; sequence DFNDGSKTENTRSAYPLESIPNASPTGR. Arginine 323 contacts substrate. ATP is bound by residues arginine 323 and threonine 448.

Belongs to the phosphoenolpyruvate carboxykinase (ATP) family. Mn(2+) serves as cofactor.

The protein resides in the cytoplasm. It catalyses the reaction oxaloacetate + ATP = phosphoenolpyruvate + ADP + CO2. It functions in the pathway carbohydrate biosynthesis; gluconeogenesis. Its function is as follows. Involved in the gluconeogenesis. Catalyzes the conversion of oxaloacetate (OAA) to phosphoenolpyruvate (PEP) through direct phosphoryl transfer between the nucleoside triphosphate and OAA. This is Phosphoenolpyruvate carboxykinase (ATP) from Rhodopseudomonas palustris (strain BisB18).